A 145-amino-acid chain; its full sequence is Mini-ribonuclease 3 (145 aa).

D27 is a catalytic residue.

The protein belongs to the MrnC RNase family. Homodimer. Mg(2+) is required as a cofactor.

The protein resides in the cytoplasm. In terms of biological role, involved in correct processing of both the 5' and 3' ends of 23S rRNA precursor. Processes 30S rRNA precursor transcript even in absence of ribonuclease 3 (Rnc); Rnc processes 30S rRNA into smaller rRNA precursors. This is Mini-ribonuclease 3 from Kosmotoga olearia (strain ATCC BAA-1733 / DSM 21960 / TBF 19.5.1).